A 365-amino-acid chain; its full sequence is Quinone oxidoreductase-like protein 2 homolog (365 aa).

The protein belongs to the zinc-containing alcohol dehydrogenase family. Quinone oxidoreductase subfamily.

In Nematostella vectensis (Starlet sea anemone), this protein is Quinone oxidoreductase-like protein 2 homolog.